Here is a 375-residue protein sequence, read N- to C-terminus: Circadian-associated transcriptional repressor (375 aa).

Low complexity predominate over residues 1 to 32 (MDSPSSVSSYSSSSLSPSFSTSSVNSDFSFPS). 3 disordered regions span residues 1-102 (MDSP…LNTQ), 192-218 (KSSS…AASP), and 351-375 (DREM…DPQP). The segment covering 33-46 (DNEREGKGTHELRP) has biased composition (basic and acidic residues).

As to quaternary structure, interacts with BMAL1, PER2, CRY2, BHLHE41, HDAC1 NR3C1.

Its subcellular location is the nucleus. It localises to the PML body. Transcriptional repressor which forms a negative regulatory component of the circadian clock and acts independently of the circadian transcriptional repressors: CRY1, CRY2 and BHLHE41. In a histone deacetylase-dependent manner represses the transcriptional activator activity of the CLOCK-BMAL1 heterodimer. Abrogates the interaction of BMAL1 with the transcriptional coactivator CREBBP and can repress the histone acetyl-transferase activity of the CLOCK-BMAL1 heterodimer, reducing histone acetylation of its target genes. Rhythmically binds the E-box elements (5'-CACGTG-3') on circadian gene promoters and its occupancy shows circadian oscillation antiphasic to BMAL1. Interacts with the glucocorticoid receptor (NR3C1) and contributes to the repressive function in the glucocorticoid response. This Mus musculus (Mouse) protein is Circadian-associated transcriptional repressor (Ciart).